The sequence spans 236 residues: MKTKQDLQELYFPTPKLIEWENGVRQYSSVRGDTEVLLSYVPPHTNVEPHQHKEVQIGLVVSGELSMTVGDVTRKMTALESAYIAPPYVPHGARNETDQEVIAIDIKRLKAGETYTSPEDYFLNIFKTRDLLPGMEVTFFVEDWVEIMLANIPGNGGEMPFHKHRNEQIGICIGGGYDMTIEGCKVDMTFGTAYFCDPREDHGAINRFEKDSKSVNIFFPPRYNRAKAKKLEAKES.

Cupin type-2 domains follow at residues 40–106 (YVPP…AIDI) and 151–215 (NIPG…SKSV). 8 residues coordinate a divalent metal cation: His-50, His-52, Gln-56, His-91, His-162, His-164, Gln-168, and His-202. A substrate-binding site is contributed by Tyr-223.

As to quaternary structure, monomer. It depends on Fe(2+) as a cofactor. Co(2+) serves as cofactor.

Its subcellular location is the cytoplasm. It catalyses the reaction 3-[(4R)-4-hydroxycyclohexa-1,5-dien-1-yl]-2-oxopropanoate = 3-[(1E,4R)-4-hydroxycyclohex-2-en-1-ylidene]pyruvate. It functions in the pathway antibiotic biosynthesis; bacilysin biosynthesis. Its function is as follows. Part of the bacABCDEF operon responsible for the biosynthesis of the nonribosomally synthesized dipeptide antibiotic bacilysin, composed of L-alanine and L-anticapsin. Bacilysin is an irreversible inactivator of the glutaminase domain of glucosamine synthetase. BacB catalyzes the allylic isomerization of the endocyclic-delta(4),delta(8)-7R-dihydro-hydroxyphenylpyruvate (en-H2HPP) to generate a mixture of 3E,7R- and 3Z, 7R-olefins of the exocyclic-delta(3),delta(5)-dihydro-hydroxyphenylpyruvate (ex-H2HPP). In Bacillus amyloliquefaciens (Bacillus velezensis), this protein is H2HPP isomerase.